A 343-amino-acid chain; its full sequence is Methionine import ATP-binding protein MetN 1 (343 aa).

The ABC transporter domain occupies 2–241 (IKLSNITKVF…PKTPLAQKFI (240 aa)). 38–45 (GASGAGKS) is a binding site for ATP.

This sequence belongs to the ABC transporter superfamily. Methionine importer (TC 3.A.1.24) family. In terms of assembly, the complex is composed of two ATP-binding proteins (MetN), two transmembrane proteins (MetI) and a solute-binding protein (MetQ).

It localises to the cell inner membrane. It carries out the reaction L-methionine(out) + ATP + H2O = L-methionine(in) + ADP + phosphate + H(+). The enzyme catalyses D-methionine(out) + ATP + H2O = D-methionine(in) + ADP + phosphate + H(+). In terms of biological role, part of the ABC transporter complex MetNIQ involved in methionine import. Responsible for energy coupling to the transport system. In Salmonella paratyphi A (strain ATCC 9150 / SARB42), this protein is Methionine import ATP-binding protein MetN 1.